The following is a 220-amino-acid chain: Deoxyribose-phosphate aldolase (220 aa).

Catalysis depends on D89, which acts as the Proton donor/acceptor. Residue K151 is the Schiff-base intermediate with acetaldehyde of the active site. The active-site Proton donor/acceptor is the K180.

This sequence belongs to the DeoC/FbaB aldolase family. DeoC type 1 subfamily.

Its subcellular location is the cytoplasm. The enzyme catalyses 2-deoxy-D-ribose 5-phosphate = D-glyceraldehyde 3-phosphate + acetaldehyde. Its pathway is carbohydrate degradation; 2-deoxy-D-ribose 1-phosphate degradation; D-glyceraldehyde 3-phosphate and acetaldehyde from 2-deoxy-alpha-D-ribose 1-phosphate: step 2/2. Catalyzes a reversible aldol reaction between acetaldehyde and D-glyceraldehyde 3-phosphate to generate 2-deoxy-D-ribose 5-phosphate. The chain is Deoxyribose-phosphate aldolase from Streptococcus pneumoniae serotype 19F (strain G54).